A 383-amino-acid polypeptide reads, in one-letter code: uncharacterized protein (383 aa).

Residues C12, C18, C21, and C88 each contribute to the [4Fe-4S] cluster site. Q219, F246, E267, and D314 together coordinate S-adenosyl-L-methionine. The active-site Nucleophile is the C341.

Belongs to the class I-like SAM-binding methyltransferase superfamily. RNA M5U methyltransferase family.

This is an uncharacterized protein from Protochlamydia amoebophila (strain UWE25).